Here is a 148-residue protein sequence, read N- to C-terminus: Endothelial differentiation-related factor 1 (148 aa).

Ala-2 is subject to N-acetylalanine. Ser-4 carries the post-translational modification Phosphoserine. Position 25 is an N6-methyllysine (Lys-25). Residues 33–42 (RRGEDVETSK) are compositionally biased toward basic and acidic residues. The segment at 33 to 66 (RRGEDVETSKKWAAGQNKQHSITKNTAKLDRETE) is disordered. The segment at 37–113 (DVETSKKWAA…QVIADYESGR (77 aa)) is interaction with NR5A2, PPARG and NR1H3. Positions 48–58 (QNKQHSITKNT) are enriched in polar residues. Positions 69–108 (HHDRVTLEVGKVIQQGRQSKGLTQKDLATKINEKPQVIAD) are interaction with TBP and NR5A1. An IQ motif motif is present at residues 81-88 (IQQGRQSK). The HTH cro/C1-type domain occupies 81–135 (IQQGRQSKGLTQKDLATKINEKPQVIADYESGRAIPNNQVLGKIERAIGLKLRGK). A DNA-binding region (H-T-H motif) is located at residues 92-111 (QKDLATKINEKPQVIADYES).

In terms of assembly, interacts with TBP and the transcription factor IID (TFIID) complex, NR5A2, NR1H3 and PPARG. Interaction with TBP is regulated by phosphorylation. Binds NR5A1, ATF1, FOS and JUN via their conserved basic region. Binding to calmodulin is regulated by calcium and phosphorylation of the IQ motif. In terms of processing, phosphorylated (by PKA and PKC). In terms of tissue distribution, expressed in brain, liver, lung, kidney and heart (at protein level). Ubiquitously expressed. More abundant in heart, pancreas, liver, intestine and adipose tissues.

Its subcellular location is the cytoplasm. The protein localises to the nucleus. In terms of biological role, transcriptional coactivator stimulating NR5A1 and ligand-dependent NR1H3/LXRA and PPARG transcriptional activities. Enhances the DNA-binding activity of ATF1, ATF2, CREB1 and NR5A1. Regulates nitric oxid synthase activity probably by sequestering calmodulin in the cytoplasm. May function in endothelial cells differentiation, hormone-induced cardiomyocytes hypertrophy and lipid metabolism. This is Endothelial differentiation-related factor 1 (EDF1) from Homo sapiens (Human).